Reading from the N-terminus, the 514-residue chain is 3-octaprenyl-4-hydroxybenzoate carboxy-lyase (514 aa).

Residue asparagine 177 coordinates Mn(2+). Prenylated FMN contacts are provided by residues 180–182 (IYR), 194–196 (RWL), and 199–200 (RG). Position 243 (glutamate 243) interacts with Mn(2+). Aspartate 314 serves as the catalytic Proton donor.

This sequence belongs to the UbiD family. Homohexamer. Prenylated FMN is required as a cofactor. The cofactor is Mn(2+).

The protein localises to the cell membrane. It carries out the reaction a 4-hydroxy-3-(all-trans-polyprenyl)benzoate + H(+) = a 2-(all-trans-polyprenyl)phenol + CO2. It participates in cofactor biosynthesis; ubiquinone biosynthesis. Catalyzes the decarboxylation of 3-octaprenyl-4-hydroxy benzoate to 2-octaprenylphenol, an intermediate step in ubiquinone biosynthesis. The polypeptide is 3-octaprenyl-4-hydroxybenzoate carboxy-lyase (Bordetella parapertussis (strain 12822 / ATCC BAA-587 / NCTC 13253)).